The chain runs to 1102 residues: Protein MMS22-like (1102 aa).

This sequence belongs to the MMS22 family. MMS22L subfamily.

The protein localises to the nucleus. It is found in the chromosome. Involved in recombination-dependent repair of stalled or collapsed replication forks. This is Protein MMS22-like from Drosophila melanogaster (Fruit fly).